A 296-amino-acid chain; its full sequence is Probable lipid kinase YegS-like (296 aa).

The 130-residue stretch at 1-130 (MPHTLLILNG…IDLAQVNGEH (130 aa)) folds into the DAGKc domain. ATP-binding positions include Thr-37, 63-69 (GDGTINE), and Thr-92. Residues Leu-212, Asp-215, and Leu-217 each coordinate Mg(2+). The active-site Proton acceptor is Glu-268.

The protein belongs to the diacylglycerol/lipid kinase family. YegS lipid kinase subfamily. It depends on Mg(2+) as a cofactor. Ca(2+) serves as cofactor.

The protein resides in the cytoplasm. In terms of biological role, probably phosphorylates lipids; the in vivo substrate is unknown. The sequence is that of Probable lipid kinase YegS-like from Yersinia pestis bv. Antiqua (strain Angola).